Consider the following 242-residue polypeptide: NAD-dependent protein deacetylase 1 (242 aa).

In terms of domain architecture, Deacetylase sirtuin-type spans 1 to 242 (MTITSWLAAS…LNEQLAEVDP (242 aa)). NAD(+) is bound by residues Ala-19, Thr-23, Phe-30, Arg-31, Gln-97, Val-99, Asp-100, and His-115. Residue Phe-30 coordinates nicotinamide. Residues Val-99 and Asp-100 each contribute to the nicotinamide site. His-115 (proton acceptor) is an active-site residue. Cys-123, Cys-126, Cys-142, and Cys-144 together coordinate Zn(2+). Ser-182, Ser-183, Asn-207, and Ile-226 together coordinate NAD(+).

The protein belongs to the sirtuin family. Class U subfamily. The cofactor is Zn(2+).

Its subcellular location is the cytoplasm. It carries out the reaction N(6)-acetyl-L-lysyl-[protein] + NAD(+) + H2O = 2''-O-acetyl-ADP-D-ribose + nicotinamide + L-lysyl-[protein]. Functionally, NAD-dependent protein deacetylase which modulates the activities of several enzymes which are inactive in their acetylated form. In Geobacillus kaustophilus (strain HTA426), this protein is NAD-dependent protein deacetylase 1.